A 145-amino-acid chain; its full sequence is Protein SprT-like (145 aa).

A SprT-like domain is found at 4–140 (TNYVQEVSLA…VCGNCHGKLI (137 aa)). His64 lines the Zn(2+) pocket. Glu65 is a catalytic residue. His68 contacts Zn(2+).

Belongs to the SprT family. Zn(2+) is required as a cofactor.

It is found in the cytoplasm. The protein is Protein SprT-like of Streptococcus pyogenes serotype M6 (strain ATCC BAA-946 / MGAS10394).